Reading from the N-terminus, the 333-residue chain is MASSSATAVPLTREQVVPSRQRIKLPAWLEVAKPRLIPLLLATTLGGMALTEGWPLSSPRLVCTLGGGALAAAAAGVLNCLWEQELDGRMQRTSGRALPSGRLSPTAAFAGAVSCALAAATLLVSGVNCLAAGLSLLGLCSYVLLYTALLKPRTTQNIVIGGVAGAIPPLVGAAAATGHVGLGGWWLFALVMVWTPAHFWALALLLRDDYRAVGIPMLPVVKGPVVTARAIRRYGWATVLLSFLGVWALPEGGLLYGLLLLPFNGRLLQMVERLGAEPDSTERAKGLFRWSILYLFGICLLLVFSRQSGAAVFDLQLRGWLAALPAGLPGINA.

A run of 8 helical transmembrane segments spans residues 36–56 (LIPL…GWPL), 61–81 (LVCT…LNCL), 107–127 (AAFA…VSGV), 130–150 (LAAG…TALL), 158–178 (IVIG…AATG), 186–206 (WLFA…ALLL), 243–263 (FLGV…LLPF), and 284–304 (AKGL…LLVF).

This sequence belongs to the UbiA prenyltransferase family. Protoheme IX farnesyltransferase subfamily.

It is found in the cell inner membrane. The enzyme catalyses heme b + (2E,6E)-farnesyl diphosphate + H2O = Fe(II)-heme o + diphosphate. It participates in porphyrin-containing compound metabolism; heme O biosynthesis; heme O from protoheme: step 1/1. Functionally, converts heme B (protoheme IX) to heme O by substitution of the vinyl group on carbon 2 of heme B porphyrin ring with a hydroxyethyl farnesyl side group. In Synechococcus sp. (strain WH7803), this protein is Protoheme IX farnesyltransferase.